We begin with the raw amino-acid sequence, 159 residues long: 2-C-methyl-D-erythritol 2,4-cyclodiphosphate synthase (159 aa).

2 residues coordinate a divalent metal cation: aspartate 10 and histidine 12. 4-CDP-2-C-methyl-D-erythritol 2-phosphate contacts are provided by residues 10-12 (DVH) and 37-38 (HS). Histidine 45 contacts a divalent metal cation. 4-CDP-2-C-methyl-D-erythritol 2-phosphate-binding positions include 59–61 (DIG), 64–68 (FPDTD), 103–109 (AQAPKML), 135–138 (TTTE), phenylalanine 142, and arginine 145.

This sequence belongs to the IspF family. Homotrimer. Requires a divalent metal cation as cofactor.

The enzyme catalyses 4-CDP-2-C-methyl-D-erythritol 2-phosphate = 2-C-methyl-D-erythritol 2,4-cyclic diphosphate + CMP. Its pathway is isoprenoid biosynthesis; isopentenyl diphosphate biosynthesis via DXP pathway; isopentenyl diphosphate from 1-deoxy-D-xylulose 5-phosphate: step 4/6. Involved in the biosynthesis of isopentenyl diphosphate (IPP) and dimethylallyl diphosphate (DMAPP), two major building blocks of isoprenoid compounds. Catalyzes the conversion of 4-diphosphocytidyl-2-C-methyl-D-erythritol 2-phosphate (CDP-ME2P) to 2-C-methyl-D-erythritol 2,4-cyclodiphosphate (ME-CPP) with a corresponding release of cytidine 5-monophosphate (CMP). This is 2-C-methyl-D-erythritol 2,4-cyclodiphosphate synthase from Francisella philomiragia subsp. philomiragia (strain ATCC 25017 / CCUG 19701 / FSC 153 / O#319-036).